Consider the following 137-residue polypeptide: Small ribosomal subunit protein uS9 (137 aa).

Residues 105–117 show a composition bias toward basic and acidic residues; that stretch reads LKVEGYLTRDPRA. The segment at 105–137 is disordered; it reads LKVEGYLTRDPRAKERKKYGLRKARKAPQYSKR. Over residues 118-137 the composition is skewed to basic residues; sequence KERKKYGLRKARKAPQYSKR.

Belongs to the universal ribosomal protein uS9 family.

The protein is Small ribosomal subunit protein uS9 of Cyanothece sp. (strain PCC 7425 / ATCC 29141).